The sequence spans 198 residues: IMP cyclohydrolase (198 aa).

Belongs to the archaeal IMP cyclohydrolase family.

The catalysed reaction is IMP + H2O = 5-formamido-1-(5-phospho-D-ribosyl)imidazole-4-carboxamide. Its pathway is purine metabolism; IMP biosynthesis via de novo pathway; IMP from 5-formamido-1-(5-phospho-D-ribosyl)imidazole-4-carboxamide: step 1/1. Functionally, catalyzes the cyclization of 5-formylamidoimidazole-4-carboxamide ribonucleotide to IMP. The chain is IMP cyclohydrolase from Thermococcus kodakarensis (strain ATCC BAA-918 / JCM 12380 / KOD1) (Pyrococcus kodakaraensis (strain KOD1)).